A 177-amino-acid chain; its full sequence is MSRVGKKPVVVPSGVTASVQGQIVTMKGPKGQLQFIVHDDVEVQFENGSVTVKPRVETNRARALYGTARAQVANLLEGVTKGFEKKLDITGVGYRAALQGKKLQLALGYSHDVVYDIPDGITITVPKPTEIFISGNDSQRVGQVAAEIRSYRPPEPYKGKGVRYSDEFIFRKEGKKK.

The protein belongs to the universal ribosomal protein uL6 family. In terms of assembly, part of the 50S ribosomal subunit.

Its function is as follows. This protein binds to the 23S rRNA, and is important in its secondary structure. It is located near the subunit interface in the base of the L7/L12 stalk, and near the tRNA binding site of the peptidyltransferase center. This is Large ribosomal subunit protein uL6 from Rhodopseudomonas palustris (strain BisB18).